The chain runs to 81 residues: U-poneritoxin(01)-Om2a (81 aa).

Residues 1 to 25 (MKPSGITFAFLVVFMMAIMYNSVQA) form the signal peptide. Residues 26 to 47 (AAIADADADAEAKAFADAFAEA) constitute a propeptide that is removed on maturation.

This sequence belongs to the formicidae venom precursor-01 superfamily. Post-translationally, truncated sequences of this peptide have also been found in the venom. It is possible they have been cleaved in the venom. Expressed by the venom gland.

It localises to the secreted. Cationic amphipathic alpha-helical peptide with antimicrobial activities against E.coli (MIC=6.2 uM), S.aureus (MIC=6.2 uM), and S.cerevisiae (MIC=50 uM). Also shows histamine-releasing activity (30.1% at 10 uM) and a weak hemolytic activity (10.4% at 50 uM). This is U-poneritoxin(01)-Om2a from Odontomachus monticola (Trap-jaw ant).